A 373-amino-acid polypeptide reads, in one-letter code: METTKNRRVRFTGGLHEPAQDSTMCGNAELQSRERTKTRQRVYNESKRDLVDLLRVYTCLNSVRMFTFVNFGRRIPLAWPEGYQLVINNCRDENEYADEKLDELAGLVCCPERLVVLGYVKKRGGIGSEPCYWFSKGDIVVLLGGAGRVYAHTWLLPQQLCRVGDTIDDFLRKGLKRFYYAHQLVSSLQFVVEDPEVDGVRSCRDVLCFRDRHIGRSFALRWPKNETLLFHRRRDSFAFVMCDEARRRLAEMCFFGSFGYKYFGDEGRISLYVADDGQIFGFNDNDEDGRPRFVAEDFQQFRRIGVTQYYKSYVFRREQPEWALLPTCHLSRMFYQKTWRQADADVLFLIARNDERNKFPDAGTRSAVHDVVR.

This sequence belongs to the herpesviridae US22 family.

The protein is Protein U3 (U3) of Human herpesvirus 6A (strain Uganda-1102) (HHV-6 variant A).